The following is a 147-amino-acid chain: Small ribosomal subunit protein uS5 (147 aa).

The S5 DRBM domain occupies 9–72 (FEEVVVNISR…DNAFKNITTV (64 aa)).

The protein belongs to the universal ribosomal protein uS5 family. As to quaternary structure, part of the 30S ribosomal subunit. Contacts proteins S4 and S8.

Functionally, with S4 and S12 plays an important role in translational accuracy. Located at the back of the 30S subunit body where it stabilizes the conformation of the head with respect to the body. In Nitratiruptor sp. (strain SB155-2), this protein is Small ribosomal subunit protein uS5.